Here is a 292-residue protein sequence, read N- to C-terminus: 4-amino-L-phenylalanine/4-methylamino-L-phenylalanine methyltransferase (292 aa).

128–132 (CAGPG) provides a ligand contact to S-adenosyl-L-methionine.

The protein belongs to the protein N5-glutamine methyltransferase family.

It carries out the reaction 4-amino-L-phenylalanine + S-adenosyl-L-methionine = 4-methylamino-L-phenylalanine + S-adenosyl-L-homocysteine + H(+). It catalyses the reaction 4-methylamino-L-phenylalanine + S-adenosyl-L-methionine = 4-dimethylamino-L-phenylalanine + S-adenosyl-L-homocysteine + H(+). It participates in antibiotic biosynthesis. Its function is as follows. Involved in pristinamycin I biosynthesis. Catalyzes the SAM-dependent methylation of 4-amino-L-phenylalanine (PAPA) to 4-methylamino-L-phenylalanine (MMPAPA), and of MMPAPA to 4-dimethylamino-L-phenylalanine (DMPAPA). The chain is 4-amino-L-phenylalanine/4-methylamino-L-phenylalanine methyltransferase from Streptomyces pristinaespiralis.